An 81-amino-acid chain; its full sequence is LYR motif-containing protein At3g19508 (81 aa).

It belongs to the complex I LYR family. LYRM9 subfamily.

This chain is LYR motif-containing protein At3g19508, found in Arabidopsis thaliana (Mouse-ear cress).